A 77-amino-acid chain; its full sequence is Acyl carrier protein (77 aa).

One can recognise a Carrier domain in the interval 2 to 77; sequence AEVLEKVTKI…DAVKYIEANA (76 aa). Residue Ser-37 is modified to O-(pantetheine 4'-phosphoryl)serine.

The protein belongs to the acyl carrier protein (ACP) family. 4'-phosphopantetheine is transferred from CoA to a specific serine of apo-ACP by AcpS. This modification is essential for activity because fatty acids are bound in thioester linkage to the sulfhydryl of the prosthetic group.

It is found in the cytoplasm. The protein operates within lipid metabolism; fatty acid biosynthesis. Its function is as follows. Carrier of the growing fatty acid chain in fatty acid biosynthesis. The protein is Acyl carrier protein of Listeria innocua serovar 6a (strain ATCC BAA-680 / CLIP 11262).